A 98-amino-acid chain; its full sequence is Large ribosomal subunit protein uL23 (98 aa).

This sequence belongs to the universal ribosomal protein uL23 family. In terms of assembly, part of the 50S ribosomal subunit. Contacts protein L29, and trigger factor when it is bound to the ribosome.

Its function is as follows. One of the early assembly proteins it binds 23S rRNA. One of the proteins that surrounds the polypeptide exit tunnel on the outside of the ribosome. Forms the main docking site for trigger factor binding to the ribosome. The chain is Large ribosomal subunit protein uL23 from Rickettsia canadensis (strain McKiel).